Here is a 645-residue protein sequence, read N- to C-terminus: Matrix metalloproteinase-24 (645 aa).

Residues 1-10 (MPRSRGGRAA) are compositionally biased toward low complexity. The tract at residues 1–26 (MPRSRGGRAAPGPPPPPPPPGQAPRW) is disordered. The first 52 residues, 1-52 (MPRSRGGRAAPGPPPPPPPPGQAPRWSRWRVPGRLLLLLLPALCCLPGAARA), serve as a signal peptide directing secretion. Over residues 11–22 (PGPPPPPPPPGQ) the composition is skewed to pro residues. Positions 53 to 155 (AAAAAGAGNR…HLSRRRRNKR (103 aa)) are excised as a propeptide. Over 53–602 (AAAAAGAGNR…INDVPGSVNA (550 aa)) the chain is Extracellular. The short motif at 137 to 144 (PRCGVPDH) is the Cysteine switch element. Residues C139 and H282 each coordinate Zn(2+). E283 is a catalytic residue. Zn(2+)-binding residues include H286 and H292. A disordered region spans residues 323-380 (QKIYGPPAEPLEPTRPLPTLPVRRIHSPSERKHERQPRPPRPPLGDRPSTPGTKPNIC). Over residues 329–341 (PAEPLEPTRPLPT) the composition is skewed to pro residues. The span at 349-359 (SPSERKHERQP) shows a compositional bias: basic and acidic residues. Hemopexin repeat units lie at residues 377–425 (PNIC…WKGL), 426–471 (PARI…GSCL), 473–521 (REGI…KGIP), and 522–569 (QAPQ…WMGC). A disulfide bond links C380 and C569. A helical transmembrane segment spans residues 603–623 (VAVVIPCILSLCILVLVYTIF). Over 624 to 645 (QFKNKTGPQPVTYYKRPVQEWV) the chain is Cytoplasmic. A PDZ-binding motif is present at residues 643–645 (EWV).

The protein belongs to the peptidase M10A family. In terms of assembly, interacts (via PDZ-binding motif) with APBA3 (via PDZ domain). Interacts with GRIP1 and GRIP2. The cofactor is Zn(2+). Ca(2+) is required as a cofactor. Post-translationally, cleaved by a furin endopeptidase in the trans-Golgi network. As to expression, predominantly expressed in brain, kidney, pancreas and lung. Overexpressed in a series of brain tumors, including astrocytomas and glioblastomas.

The protein resides in the cell membrane. It localises to the golgi apparatus. It is found in the trans-Golgi network membrane. The protein localises to the secreted. Its subcellular location is the extracellular space. The protein resides in the extracellular matrix. Functionally, metalloprotease that mediates cleavage of N-cadherin (CDH2) and acts as a regulator of neuro-immune interactions and neural stem cell quiescence. Involved in cell-cell interactions between nociceptive neurites and mast cells, possibly by mediating cleavage of CDH2, thereby acting as a mediator of peripheral thermal nociception and inflammatory hyperalgesia. Key regulator of neural stem cells quiescence by mediating cleavage of CDH2, affecting CDH2-mediated anchorage of neural stem cells to ependymocytes in the adult subependymal zone, leading to modulate their quiescence. May play a role in axonal growth. Able to activate progelatinase A. May also be a proteoglycanase involved in degradation of proteoglycans, such as dermatan sulfate and chondroitin sulfate proteoglycans. Cleaves partially fibronectin, but not collagen type I, nor laminin. This Homo sapiens (Human) protein is Matrix metalloproteinase-24 (MMP24).